Here is a 263-residue protein sequence, read N- to C-terminus: Tryptophan synthase alpha chain (263 aa).

Catalysis depends on proton acceptor residues glutamate 41 and aspartate 52.

Belongs to the TrpA family. Tetramer of two alpha and two beta chains.

The catalysed reaction is (1S,2R)-1-C-(indol-3-yl)glycerol 3-phosphate + L-serine = D-glyceraldehyde 3-phosphate + L-tryptophan + H2O. The protein operates within amino-acid biosynthesis; L-tryptophan biosynthesis; L-tryptophan from chorismate: step 5/5. Functionally, the alpha subunit is responsible for the aldol cleavage of indoleglycerol phosphate to indole and glyceraldehyde 3-phosphate. The sequence is that of Tryptophan synthase alpha chain from Geobacillus sp. (strain WCH70).